We begin with the raw amino-acid sequence, 1377 residues long: DNA-directed RNA polymerase subunit beta' (1377 aa).

Residues C60, C62, C75, and C78 each contribute to the Zn(2+) site. Mg(2+) contacts are provided by D449, D451, and D453. C777, C851, C858, and C861 together coordinate Zn(2+).

It belongs to the RNA polymerase beta' chain family. In terms of assembly, the RNAP catalytic core consists of 2 alpha, 1 beta, 1 beta' and 1 omega subunit. When a sigma factor is associated with the core the holoenzyme is formed, which can initiate transcription. The cofactor is Mg(2+). Zn(2+) is required as a cofactor.

The enzyme catalyses RNA(n) + a ribonucleoside 5'-triphosphate = RNA(n+1) + diphosphate. Its function is as follows. DNA-dependent RNA polymerase catalyzes the transcription of DNA into RNA using the four ribonucleoside triphosphates as substrates. This Borrelia turicatae (strain 91E135) protein is DNA-directed RNA polymerase subunit beta'.